Consider the following 329-residue polypeptide: DNA-directed RNA polymerase subunit alpha (329 aa).

Positions 1–235 are alpha N-terminal domain (alpha-NTD); sequence MQGSVTEFLK…EQLDAFVDLR (235 aa). The tract at residues 249 to 329 is alpha C-terminal domain (alpha-CTD); the sequence is FDPILLRPVD…NWPPASIAED (81 aa).

Belongs to the RNA polymerase alpha chain family. As to quaternary structure, homodimer. The RNAP catalytic core consists of 2 alpha, 1 beta, 1 beta' and 1 omega subunit. When a sigma factor is associated with the core the holoenzyme is formed, which can initiate transcription.

It catalyses the reaction RNA(n) + a ribonucleoside 5'-triphosphate = RNA(n+1) + diphosphate. In terms of biological role, DNA-dependent RNA polymerase catalyzes the transcription of DNA into RNA using the four ribonucleoside triphosphates as substrates. The polypeptide is DNA-directed RNA polymerase subunit alpha (Photobacterium profundum (strain SS9)).